Here is a 226-residue protein sequence, read N- to C-terminus: Cytidylate kinase (226 aa).

An ATP-binding site is contributed by 9–17; that stretch reads GPAGAGKST.

Belongs to the cytidylate kinase family. Type 1 subfamily.

The protein localises to the cytoplasm. The catalysed reaction is CMP + ATP = CDP + ADP. The enzyme catalyses dCMP + ATP = dCDP + ADP. This Clostridium tetani (strain Massachusetts / E88) protein is Cytidylate kinase.